Consider the following 452-residue polypeptide: Protein phosphatase 1F (452 aa).

Residues 153–410 (LVSIHAIRNT…DNITVMVVFL (258 aa)) form the PPM-type phosphatase domain. 4 residues coordinate Mn(2+): aspartate 195, glycine 196, aspartate 357, and aspartate 401. Residue serine 452 is modified to Phosphoserine.

Belongs to the PP2C family. Associates with FEM1B. The cofactor is Mg(2+). Requires Mn(2+) as cofactor. As to expression, expressed in the liver.

The catalysed reaction is O-phospho-L-seryl-[protein] + H2O = L-seryl-[protein] + phosphate. The enzyme catalyses O-phospho-L-threonyl-[protein] + H2O = L-threonyl-[protein] + phosphate. Dephosphorylates and concomitantly deactivates CaM-kinase II activated upon autophosphorylation, and CaM-kinases IV and I activated upon phosphorylation by CaM-kinase kinase. Promotes apoptosis. The chain is Protein phosphatase 1F (Ppm1f) from Mus musculus (Mouse).